The chain runs to 70 residues: DNA-directed RNA polymerase subunit epsilon (70 aa).

This sequence belongs to the RNA polymerase subunit epsilon family. As to quaternary structure, RNAP is composed of a core of 2 alpha, a beta and a beta' subunit. The core is associated with a delta subunit, and at least one of epsilon or omega. When a sigma factor is associated with the core the holoenzyme is formed, which can initiate transcription.

The enzyme catalyses RNA(n) + a ribonucleoside 5'-triphosphate = RNA(n+1) + diphosphate. A non-essential component of RNA polymerase (RNAP). This is DNA-directed RNA polymerase subunit epsilon from Bacillus cereus (strain Q1).